Here is a 320-residue protein sequence, read N- to C-terminus: MKMINKLIVPVTASALLLGACGASATDSKENTLISSKAGDVTVADTMKKIGKDQIANASFTEMLNKILADKYKNKVNDKKIDEQIEKMQKQYGGKDKFKKALQQQGLTADKYKENLRTAAYHKELLSDKIKISDSEIKEDSKKASHILIKVKSKKSDKEGLDDKEAKQKAEEIQKEVSKDPSKFGEIAKKESMDTGSAKKDGELGYVLKGQTDKDFEKALFKLKDGEVSDVVKSSFGYHIIKADKPTDFNSEKQSLKEKLVDQKVQKNPKLLTDAYKDLLKEYDVDFKDRDIKSVVEDKILNPEKLKQGGAQGGQSGMSQ.

A signal peptide spans 1-20; the sequence is MKMINKLIVPVTASALLLGA. The N-palmitoyl cysteine moiety is linked to residue C21. A lipid anchor (S-diacylglycerol cysteine) is attached at C21. Residues 139-245 enclose the PpiC domain; that stretch reads EDSKKASHIL…FGYHIIKADK (107 aa). Residues 159–198 are disordered; the sequence is EGLDDKEAKQKAEEIQKEVSKDPSKFGEIAKKESMDTGSA.

Belongs to the PrsA family.

The protein localises to the cell membrane. It catalyses the reaction [protein]-peptidylproline (omega=180) = [protein]-peptidylproline (omega=0). Functionally, plays a major role in protein secretion by helping the post-translocational extracellular folding of several secreted proteins. This Staphylococcus aureus (strain MRSA252) protein is Foldase protein PrsA.